We begin with the raw amino-acid sequence, 94 residues long: Small ribosomal subunit protein uS19m (94 aa).

The protein belongs to the universal ribosomal protein uS19 family.

The protein resides in the mitochondrion. This Petunia hybrida (Petunia) protein is Small ribosomal subunit protein uS19m (RPS19).